We begin with the raw amino-acid sequence, 120 residues long: uncharacterized protein (120 aa).

This is an uncharacterized protein from Aquifex aeolicus (strain VF5).